A 330-amino-acid polypeptide reads, in one-letter code: Beta-ketoacyl-[acyl-carrier-protein] synthase III (330 aa).

Active-site residues include Cys-114 and His-257. Residues 258 to 262 (QANLR) are ACP-binding. The active site involves Asn-287.

This sequence belongs to the thiolase-like superfamily. FabH family. Homodimer.

It is found in the cytoplasm. The catalysed reaction is malonyl-[ACP] + acetyl-CoA + H(+) = 3-oxobutanoyl-[ACP] + CO2 + CoA. It functions in the pathway lipid metabolism; fatty acid biosynthesis. In terms of biological role, catalyzes the condensation reaction of fatty acid synthesis by the addition to an acyl acceptor of two carbons from malonyl-ACP. Catalyzes the first condensation reaction which initiates fatty acid synthesis and may therefore play a role in governing the total rate of fatty acid production. Possesses both acetoacetyl-ACP synthase and acetyl transacylase activities. Its substrate specificity determines the biosynthesis of branched-chain and/or straight-chain of fatty acids. This Oleidesulfovibrio alaskensis (strain ATCC BAA-1058 / DSM 17464 / G20) (Desulfovibrio alaskensis) protein is Beta-ketoacyl-[acyl-carrier-protein] synthase III.